We begin with the raw amino-acid sequence, 599 residues long: Protein ref(2)P (599 aa).

The PB1 domain occupies 3-88; sequence EKLLKITYQG…CESNMHVQVA (86 aa). The ZZ-type zinc finger occupies 122–173; the sequence is HDSVQCDGCGLAPLIGFRYKCVQCSNFDLCQKCESAHKHPEHLMLRMPTNNG. Cys-127, Cys-130, Cys-142, Cys-145, Cys-151, Cys-154, His-160, and His-163 together coordinate Zn(2+). Disordered stretches follow at residues 192–225, 245–319, 357–453, and 507–544; these read RRSR…HARR, TTAT…INLD, GIFA…LDPE, and ASAN…DDKR. The span at 199–211 shows a compositional bias: low complexity; sequence PFQEASQPAPAAE. Residues 276–286 show a composition bias toward basic and acidic residues; it reads KATESEAKPTE. The span at 291-319 shows a compositional bias: polar residues; it reads NTDQSVPTTEDPVTTPRSTEPTTPVINLD. Residues 375–411 show a composition bias toward low complexity; sequence QSQSSGQSAASSASQSAVPSAAPSANQSNVPSANQSA. 3 repeat units span residues 386–393, 399–406, and 407–413. Residues 386–413 are 3 X 8 AA repeats of S-A-N-Q-S-X-X-P; sequence SASQSAVPSAAPSANQSNVPSANQSATP. Over residues 412–423 the composition is skewed to polar residues; the sequence is TPSISGSISDAQ. Residues 511–536 show a composition bias toward low complexity; that stretch reads TQTAQVDTVSTSTSTTSVTTNSVGTS. One can recognise a UBA domain in the interval 550–595; that stretch reads HTDERINQSIHAMMAMGFSNEGAWLTQLLESVQGNIPAALDVMHVS.

Interacts with aPKC and Traf6.

The protein resides in the nucleus. The protein localises to the cytoplasm. Its function is as follows. Required for selective autophagy activation by ubiquitinated proteins. Implicated in sigma rhabdovirus multiplication and necessary for male fertility. Involved in activating transcription of Drs. This is Protein ref(2)P (ref(2)P) from Drosophila simulans (Fruit fly).